The chain runs to 234 residues: Ribonuclease HII (234 aa).

The 192-residue stretch at 16–207 (ALVAGVDEAG…VRRMLTPKAI (192 aa)) folds into the RNase H type-2 domain. A divalent metal cation contacts are provided by Asp22, Glu23, and Asp115.

It belongs to the RNase HII family. Mn(2+) is required as a cofactor. The cofactor is Mg(2+).

Its subcellular location is the cytoplasm. The enzyme catalyses Endonucleolytic cleavage to 5'-phosphomonoester.. Endonuclease that specifically degrades the RNA of RNA-DNA hybrids. This chain is Ribonuclease HII, found in Xylella fastidiosa (strain M23).